A 607-amino-acid chain; its full sequence is uncharacterized protein (607 aa).

Positions 16–44 form a DNA-binding region, zn(2)-C6 fungal-type; that stretch reads CTVCRKRKLKCDGNKPCGRCIRLNTPKEC.

The protein localises to the nucleus. This is an uncharacterized protein from Saccharomyces cerevisiae (strain ATCC 204508 / S288c) (Baker's yeast).